We begin with the raw amino-acid sequence, 502 residues long: 1-aminocyclopropane-1-carboxylate synthase-like protein 1 (502 aa).

Positions methionine 1 to methionine 24 are disordered. Glutamate 106 contacts substrate. Lysine 324 is modified (N6-(pyridoxal phosphate)lysine).

This sequence belongs to the class-I pyridoxal-phosphate-dependent aminotransferase family.

Does not catalyze the synthesis of 1-aminocyclopropane-1-carboxylate but is capable of catalyzing the deamination of L-vinylglycine. The chain is 1-aminocyclopropane-1-carboxylate synthase-like protein 1 (Accs) from Mus musculus (Mouse).